We begin with the raw amino-acid sequence, 189 residues long: Cancer/testis antigen family 45 member A1 (189 aa).

Residues 1–23 are compositionally biased toward basic and acidic residues; that stretch reads MTDKTEKVAVDPETVFKRPRECD. Disordered regions lie at residues 1 to 27 and 83 to 118; these read MTDK…SPSY and RMMQ…SPKS.

The protein belongs to the CT45 family. In terms of tissue distribution, testis specific. Expressed in cancer cell lines.

Its subcellular location is the nucleus. This is Cancer/testis antigen family 45 member A1 from Homo sapiens (Human).